Here is a 324-residue protein sequence, read N- to C-terminus: tRNA U34 carboxymethyltransferase (324 aa).

Carboxy-S-adenosyl-L-methionine is bound by residues Lys-91, Trp-105, Lys-110, Gly-130, 152–154, 181–182, Met-196, Tyr-200, and Arg-315; these read DPS and IE.

This sequence belongs to the class I-like SAM-binding methyltransferase superfamily. CmoB family. Homotetramer.

The catalysed reaction is carboxy-S-adenosyl-L-methionine + 5-hydroxyuridine(34) in tRNA = 5-carboxymethoxyuridine(34) in tRNA + S-adenosyl-L-homocysteine + H(+). Catalyzes carboxymethyl transfer from carboxy-S-adenosyl-L-methionine (Cx-SAM) to 5-hydroxyuridine (ho5U) to form 5-carboxymethoxyuridine (cmo5U) at position 34 in tRNAs. The sequence is that of tRNA U34 carboxymethyltransferase from Photobacterium profundum (strain SS9).